Reading from the N-terminus, the 41-residue chain is uncharacterized protein (41 aa).

The tract at residues 19–41 is disordered; sequence NSTRNSSSSSRSSYSSRTTVFSL.

This is an uncharacterized protein from Dictyostelium discoideum (Social amoeba).